A 403-amino-acid chain; its full sequence is Cysteine desulfurase IscS (403 aa).

Pyridoxal 5'-phosphate-binding positions include Ala-73–Thr-74, Asn-153, Gln-181, and Ser-201–His-203. Residue Lys-204 is modified to N6-(pyridoxal phosphate)lysine. Thr-241 contributes to the pyridoxal 5'-phosphate binding site. Cys-326 acts as the Cysteine persulfide intermediate in catalysis. A [2Fe-2S] cluster-binding site is contributed by Cys-326.

This sequence belongs to the class-V pyridoxal-phosphate-dependent aminotransferase family. NifS/IscS subfamily. Homodimer. Forms a heterotetramer with IscU, interacts with other sulfur acceptors. Pyridoxal 5'-phosphate serves as cofactor.

It localises to the cytoplasm. It carries out the reaction (sulfur carrier)-H + L-cysteine = (sulfur carrier)-SH + L-alanine. It participates in cofactor biosynthesis; iron-sulfur cluster biosynthesis. In terms of biological role, master enzyme that delivers sulfur to a number of partners involved in Fe-S cluster assembly, tRNA modification or cofactor biosynthesis. Catalyzes the removal of elemental sulfur atoms from cysteine to produce alanine. Functions as a sulfur delivery protein for Fe-S cluster synthesis onto IscU, an Fe-S scaffold assembly protein, as well as other S acceptor proteins. The chain is Cysteine desulfurase IscS from Methylococcus capsulatus (strain ATCC 33009 / NCIMB 11132 / Bath).